Consider the following 329-residue polypeptide: Beta-ketoacyl-[acyl-carrier-protein] synthase III (329 aa).

Residues C113 and H256 contribute to the active site. Residues 257–261 are ACP-binding; sequence QANQR. The active site involves N286.

Belongs to the thiolase-like superfamily. FabH family. In terms of assembly, homodimer.

The protein resides in the cytoplasm. It catalyses the reaction malonyl-[ACP] + acetyl-CoA + H(+) = 3-oxobutanoyl-[ACP] + CO2 + CoA. Its pathway is lipid metabolism; fatty acid biosynthesis. In terms of biological role, catalyzes the condensation reaction of fatty acid synthesis by the addition to an acyl acceptor of two carbons from malonyl-ACP. Catalyzes the first condensation reaction which initiates fatty acid synthesis and may therefore play a role in governing the total rate of fatty acid production. Possesses both acetoacetyl-ACP synthase and acetyl transacylase activities. Its substrate specificity determines the biosynthesis of branched-chain and/or straight-chain of fatty acids. The protein is Beta-ketoacyl-[acyl-carrier-protein] synthase III of Natranaerobius thermophilus (strain ATCC BAA-1301 / DSM 18059 / JW/NM-WN-LF).